The chain runs to 475 residues: Ribulose bisphosphate carboxylase large chain (475 aa).

Positions 1-2 (MS) are excised as a propeptide. The residue at position 3 (P3) is an N-acetylproline. The residue at position 14 (K14) is an N6,N6,N6-trimethyllysine. Positions 123 and 173 each coordinate substrate. K175 serves as the catalytic Proton acceptor. K177 lines the substrate pocket. Mg(2+)-binding residues include K201, D203, and E204. At K201 the chain carries N6-carboxylysine. Residue H294 is the Proton acceptor of the active site. Substrate contacts are provided by R295, H327, and S379.

This sequence belongs to the RuBisCO large chain family. Type I subfamily. In terms of assembly, heterohexadecamer of 8 large chains and 8 small chains; disulfide-linked. The disulfide link is formed within the large subunit homodimers. It depends on Mg(2+) as a cofactor. Post-translationally, the disulfide bond which can form in the large chain dimeric partners within the hexadecamer appears to be associated with oxidative stress and protein turnover.

The protein resides in the plastid. Its subcellular location is the chloroplast. The enzyme catalyses 2 (2R)-3-phosphoglycerate + 2 H(+) = D-ribulose 1,5-bisphosphate + CO2 + H2O. The catalysed reaction is D-ribulose 1,5-bisphosphate + O2 = 2-phosphoglycolate + (2R)-3-phosphoglycerate + 2 H(+). In terms of biological role, ruBisCO catalyzes two reactions: the carboxylation of D-ribulose 1,5-bisphosphate, the primary event in carbon dioxide fixation, as well as the oxidative fragmentation of the pentose substrate in the photorespiration process. Both reactions occur simultaneously and in competition at the same active site. This chain is Ribulose bisphosphate carboxylase large chain, found in Pinus koraiensis (Korean pine).